A 155-amino-acid chain; its full sequence is uncharacterized protein (155 aa).

Positions 1–23 (MKIRSLSRFVLASTMFASFTASA) are cleaved as a signal peptide.

This sequence to E.coli YkfB.

This is an uncharacterized protein from Escherichia coli (strain K12).